A 304-amino-acid chain; its full sequence is Hairy/enhancer-of-split related with YRPW motif protein 1 (304 aa).

Residues Met1–Arg52 are disordered. Over residues Glu28–Ile47 the composition is skewed to polar residues. Residues Leu48–Ala117 form a transcriptional repression and interaction with NCOR1 and SIN3A region. One can recognise a bHLH domain in the interval Ala49–Leu104. Positions Tyr122–Leu158 constitute an Orange domain. A disordered region spans residues Leu196 to Ser234. The span at Gly200–Pro210 shows a compositional bias: polar residues. The YRPW motif motif lies at Tyr294–Trp297.

The protein belongs to the HEY family. As to quaternary structure, self-associates. Interacts with HES1 and HEYL. Interacts with HDAC1, NCOR1 and SIN3A. Interacts with GATA4 and GATA6. Interacts with CCDC89/BOIP. As to expression, expressed in the somitic mesoderm, the central nervous system, the kidney, the heart, nasal epithelium, and limbs.

It localises to the nucleus. In terms of biological role, transcriptional repressor which binds preferentially to the canonical E box sequence 5'-CACGTG-3'. Downstream effector of Notch signaling required for cardiovascular development. Specifically required for the Notch-induced endocardial epithelial to mesenchymal transition, which is itself criticial for cardiac valve and septum development. May be required in conjunction with HEY2 to specify arterial cell fate or identity. Promotes maintenance of neuronal precursor cells and glial versus neuronal fate specification. Represses transcription by the cardiac transcriptional activators GATA4 and GATA6 and by the neuronal bHLH factors ASCL1/MASH1 and NEUROD4/MATH3. Involved in the regulation of liver cancer cells self-renewal. This chain is Hairy/enhancer-of-split related with YRPW motif protein 1 (HEY1), found in Homo sapiens (Human).